We begin with the raw amino-acid sequence, 282 residues long: Release factor glutamine methyltransferase (282 aa).

Residues 120 to 124, Asp143, and Asn189 contribute to the S-adenosyl-L-methionine site; that span reads GVGSG. Residue 189-192 participates in substrate binding; the sequence is NPPY.

This sequence belongs to the protein N5-glutamine methyltransferase family. PrmC subfamily.

It catalyses the reaction L-glutaminyl-[peptide chain release factor] + S-adenosyl-L-methionine = N(5)-methyl-L-glutaminyl-[peptide chain release factor] + S-adenosyl-L-homocysteine + H(+). Its function is as follows. Methylates the class 1 translation termination release factors RF1/PrfA and RF2/PrfB on the glutamine residue of the universally conserved GGQ motif. This is Release factor glutamine methyltransferase from Dictyoglomus turgidum (strain DSM 6724 / Z-1310).